A 748-amino-acid polypeptide reads, in one-letter code: Basic juvenile hormone-suppressible protein 1 (748 aa).

An N-terminal signal peptide occupies residues 1-17 (MRVLVLVASLGLRGSVV).

The protein belongs to the hemocyanin family. In terms of tissue distribution, fat body, and hemolymph of larvae.

The protein is Basic juvenile hormone-suppressible protein 1 (BJSP-1) of Trichoplusia ni (Cabbage looper).